Consider the following 72-residue polypeptide: Translation initiation factor IF-1 (72 aa).

The S1-like domain occupies 1 to 72 (MSKSDIIEMQ…TRGRITWRAK (72 aa)).

This sequence belongs to the IF-1 family. Component of the 30S ribosomal translation pre-initiation complex which assembles on the 30S ribosome in the order IF-2 and IF-3, IF-1 and N-formylmethionyl-tRNA(fMet); mRNA recruitment can occur at any time during PIC assembly.

The protein resides in the cytoplasm. One of the essential components for the initiation of protein synthesis. Stabilizes the binding of IF-2 and IF-3 on the 30S subunit to which N-formylmethionyl-tRNA(fMet) subsequently binds. Helps modulate mRNA selection, yielding the 30S pre-initiation complex (PIC). Upon addition of the 50S ribosomal subunit IF-1, IF-2 and IF-3 are released leaving the mature 70S translation initiation complex. This chain is Translation initiation factor IF-1, found in Clostridium perfringens (strain 13 / Type A).